The following is a 528-amino-acid chain: MDLSVENGGLAPGFRFHPTDEELVVYYLKRKIRRKKLRVEAIGETDVYKFDPEELPEKALYKTRDRQWFFFSLRDRKHGSRSSRATERGYWKATGKDRVIHCDSRPVGEKKTLVFHRGRAPNGERTNWVMHEYTLHKEELKRCGGEDVKDAYVLYKIYKKSGSGPKNGEQYGAPFIEEEWAEDDDDDVDEPANQLVVSASVDNSLWGKGLNQSELDDNDIEELMSQVRDQSGPTLQQNGVSGLNSHVDTYNLENLEEDMYLEINDLMEPEPEPTSVEVMENNWNEDGSGLLNDDDFVGADSYFLDLGVTNPQLDFVSGDLKNGFAQSLQVNTSLMTYQANNNQFQQQSGKNQASNWPLRNSYTRQINNGSSWVQELNNDGLTVTRFGEAPGTGDSSEFLNPVPSGISTTNEDDPSKDESSKFASSVWTFLESIPAKPAYASENPFVKLNLVRMSTSGGRFRFTSKSTGNNVVVMDSDSAVKRNKSGGNNDKKKKKNKGFFCLSIIGALCALFWVIIGTMGGSGRPLLW.

The NAC domain maps to 10 to 160 (LAPGFRFHPT…AYVLYKIYKK (151 aa)). A DNA-binding region spans residues 107–166 (VGEKKTLVFHRGRAPNGERTNWVMHEYTLHKEELKRCGGEDVKDAYVLYKIYKKSGSGPK). Positions 388 to 419 (EAPGTGDSSEFLNPVPSGISTTNEDDPSKDES) are disordered. A helical transmembrane segment spans residues 499-519 (FFCLSIIGALCALFWVIIGTM).

Interacts with RCD1. In terms of tissue distribution, expressed in roots, rosette leaves, shoot apex, stems and flowers.

The protein localises to the endoplasmic reticulum membrane. Its subcellular location is the nucleus. Transcriptional activator activated by proteolytic cleavage through regulated intramembrane proteolysis (RIP). Involved in oxidative stress tolerance by mediating regulation of mitochondrial retrograde signaling during mitochondrial dysfunction. Interacts directly with the mitochondrial dysfunction DNA consensus motif 5'-CTTGNNNNNCA[AC]G-3', a cis-regulatory elements of several mitochondrial retrograde regulation-induced genes, and triggers increased oxidative stress tolerance. The polypeptide is NAC domain-containing protein 13 (Arabidopsis thaliana (Mouse-ear cress)).